A 388-amino-acid chain; its full sequence is Succinate--CoA ligase [ADP-forming] subunit beta (388 aa).

Residues 9–244 (KQLFADYGLP…PSQEDPREAH (236 aa)) form the ATP-grasp domain. ATP contacts are provided by residues Lys-46, 53 to 55 (GRG), Glu-99, Thr-102, and Glu-107. Mg(2+) is bound by residues Asn-199 and Asp-213. Substrate-binding positions include Asn-264 and 321–323 (GIV).

It belongs to the succinate/malate CoA ligase beta subunit family. As to quaternary structure, heterotetramer of two alpha and two beta subunits. It depends on Mg(2+) as a cofactor.

It catalyses the reaction succinate + ATP + CoA = succinyl-CoA + ADP + phosphate. The catalysed reaction is GTP + succinate + CoA = succinyl-CoA + GDP + phosphate. It participates in carbohydrate metabolism; tricarboxylic acid cycle; succinate from succinyl-CoA (ligase route): step 1/1. Its function is as follows. Succinyl-CoA synthetase functions in the citric acid cycle (TCA), coupling the hydrolysis of succinyl-CoA to the synthesis of either ATP or GTP and thus represents the only step of substrate-level phosphorylation in the TCA. The beta subunit provides nucleotide specificity of the enzyme and binds the substrate succinate, while the binding sites for coenzyme A and phosphate are found in the alpha subunit. The sequence is that of Succinate--CoA ligase [ADP-forming] subunit beta from Hahella chejuensis (strain KCTC 2396).